Reading from the N-terminus, the 410-residue chain is Argininosuccinate synthase (410 aa).

Residues 10–18 and A37 each bind ATP; that span reads AYSGGLDTS. Residues Y90 and S95 each coordinate L-citrulline. G120 provides a ligand contact to ATP. Positions 122, 126, and 127 each coordinate L-aspartate. N126 provides a ligand contact to L-citrulline. Residues R130, S182, S191, E267, and Y279 each coordinate L-citrulline.

It belongs to the argininosuccinate synthase family. Type 1 subfamily. As to quaternary structure, homotetramer.

It localises to the cytoplasm. The enzyme catalyses L-citrulline + L-aspartate + ATP = 2-(N(omega)-L-arginino)succinate + AMP + diphosphate + H(+). Its pathway is amino-acid biosynthesis; L-arginine biosynthesis; L-arginine from L-ornithine and carbamoyl phosphate: step 2/3. The sequence is that of Argininosuccinate synthase from Polynucleobacter asymbioticus (strain DSM 18221 / CIP 109841 / QLW-P1DMWA-1) (Polynucleobacter necessarius subsp. asymbioticus).